The following is a 490-amino-acid chain: Costunolide synthase (490 aa).

A helical; Signal-anchor for type II membrane protein membrane pass occupies residues 3 to 23; the sequence is PLTIVSLAVASFLLFAFWALS. Asn-167 and Asn-255 each carry an N-linked (GlcNAc...) asparagine glycan. Residue Cys-432 coordinates heme.

The protein belongs to the cytochrome P450 family. The cofactor is heme.

The protein localises to the membrane. It carries out the reaction germacra-1(10),4,11(13)-trien-12-oate + reduced [NADPH--hemoprotein reductase] + O2 = (+)-costunolide + oxidized [NADPH--hemoprotein reductase] + 2 H2O. It participates in secondary metabolite biosynthesis; terpenoid biosynthesis. Its function is as follows. Involved in the biosynthesis of germacrene-derived sesquiterpene lactones. Component of the parthenolide biosynthetic pathway; parthenolide and conjugates are promising anti-cancer drugs highly active against colon cancer cells. Hydroxylates germacrene A acid to 6-alpha-hydroxy-germacrne A acid, a precursor of sesquiterpene lactones that spontaneously undergoes a lactonization which yields costunolide. The sequence is that of Costunolide synthase from Lactuca sativa (Garden lettuce).